Consider the following 111-residue polypeptide: Nucleoid-associated protein CT0805 (111 aa).

This sequence belongs to the YbaB/EbfC family. In terms of assembly, homodimer.

It is found in the cytoplasm. The protein localises to the nucleoid. In terms of biological role, binds to DNA and alters its conformation. May be involved in regulation of gene expression, nucleoid organization and DNA protection. In Chlorobaculum tepidum (strain ATCC 49652 / DSM 12025 / NBRC 103806 / TLS) (Chlorobium tepidum), this protein is Nucleoid-associated protein CT0805.